Reading from the N-terminus, the 372-residue chain is 4-hydroxy-3-methylbut-2-en-1-yl diphosphate synthase (flavodoxin) (372 aa).

[4Fe-4S] cluster-binding residues include cysteine 270, cysteine 273, cysteine 305, and glutamate 312.

It belongs to the IspG family. [4Fe-4S] cluster serves as cofactor.

It carries out the reaction (2E)-4-hydroxy-3-methylbut-2-enyl diphosphate + oxidized [flavodoxin] + H2O + 2 H(+) = 2-C-methyl-D-erythritol 2,4-cyclic diphosphate + reduced [flavodoxin]. It participates in isoprenoid biosynthesis; isopentenyl diphosphate biosynthesis via DXP pathway; isopentenyl diphosphate from 1-deoxy-D-xylulose 5-phosphate: step 5/6. In terms of biological role, converts 2C-methyl-D-erythritol 2,4-cyclodiphosphate (ME-2,4cPP) into 1-hydroxy-2-methyl-2-(E)-butenyl 4-diphosphate. In Salmonella typhi, this protein is 4-hydroxy-3-methylbut-2-en-1-yl diphosphate synthase (flavodoxin).